Here is a 251-residue protein sequence, read N- to C-terminus: Imidazole glycerol phosphate synthase subunit HisF (251 aa).

Active-site residues include Asp-11 and Asp-130.

Belongs to the HisA/HisF family. As to quaternary structure, heterodimer of HisH and HisF.

It localises to the cytoplasm. The catalysed reaction is 5-[(5-phospho-1-deoxy-D-ribulos-1-ylimino)methylamino]-1-(5-phospho-beta-D-ribosyl)imidazole-4-carboxamide + L-glutamine = D-erythro-1-(imidazol-4-yl)glycerol 3-phosphate + 5-amino-1-(5-phospho-beta-D-ribosyl)imidazole-4-carboxamide + L-glutamate + H(+). Its pathway is amino-acid biosynthesis; L-histidine biosynthesis; L-histidine from 5-phospho-alpha-D-ribose 1-diphosphate: step 5/9. IGPS catalyzes the conversion of PRFAR and glutamine to IGP, AICAR and glutamate. The HisF subunit catalyzes the cyclization activity that produces IGP and AICAR from PRFAR using the ammonia provided by the HisH subunit. The chain is Imidazole glycerol phosphate synthase subunit HisF from Phocaeicola vulgatus (strain ATCC 8482 / DSM 1447 / JCM 5826 / CCUG 4940 / NBRC 14291 / NCTC 11154) (Bacteroides vulgatus).